We begin with the raw amino-acid sequence, 474 residues long: Salutaridinol 7-O-acetyltransferase (474 aa).

His163 acts as the Proton acceptor in catalysis. The tract at residues 213 to 234 is disordered; the sequence is ERLTSPSGMSEIPFSSTPEDTE. Residues 214–230 are compositionally biased toward polar residues; the sequence is RLTSPSGMSEIPFSSTP. Residue Asp416 is the Proton acceptor of the active site.

This sequence belongs to the plant acyltransferase family. As to expression, expressed in root, stem, leaf and capsule of the mature plant. Restricted to sieve elements of the phloem adjacent or proximal to laticifers.

It catalyses the reaction (7S)-salutaridinol + acetyl-CoA = (7S)-O-acetylsalutaridinol + CoA. It functions in the pathway alkaloid biosynthesis; morphine biosynthesis. Functionally, acetyltransferase involved in biosynthesis of morphinan-type benzylisoquinoline and opiate alkaloids natural products. Catalyzes the conversion of the phenanthrene alkaloid salutaridinol to salutaridinol-7-O-acetate, the immediate precursor of thebaine along the morphine biosynthetic pathway. Conversion of 7-O-acetylsalutaridinol into thebaine is spontaneous. This chain is Salutaridinol 7-O-acetyltransferase, found in Papaver somniferum (Opium poppy).